Reading from the N-terminus, the 315-residue chain is Protein sprouty homolog 2 (315 aa).

The span at 1–14 (MEARAQSGSGSQPL) shows a compositional bias: polar residues. Disordered regions lie at residues 1 to 38 (MEAR…PQQV) and 51 to 140 (NTNE…GSSF). Residues 20-32 (DSGRQRGEPDPRD) show a composition bias toward basic and acidic residues. The segment covering 88–100 (PRQPSRPQHPPAH) has biased composition (pro residues). The segment covering 109-140 (RSISTVSSGSRSSTRTSTSSSSSEQRLLGSSF) has biased composition (low complexity). The tract at residues 118-315 (SRSSTRTSTS…VPPRNFEKPT (198 aa)) is required for interaction with CAV1. An SPR domain is found at 177–291 (KCEDCGKCKC…CYDRVNRPGC (115 aa)). The tract at residues 178 to 315 (CEDCGKCKCK…VPPRNFEKPT (138 aa)) is required for interaction with TESK1.

It belongs to the sprouty family. In terms of assembly, forms heterodimers with SPRY1. Forms a tripartite complex containing GAB1, METTL13 and SPRY2. Within the complex interacts with METTL13. Interacts with RAF1. Interacts (via C-terminus) with TESK1 (via C-terminus); the interaction disrupts SPRY2 interaction with GRB2, potentially via disruption of SPRY2 serine dephosphorylation. Interacts with PPP2R1A/PP2A-A and PPP2CA/PP2A-C; the interaction with PPP2CA/PP2A-C is inhibited by interaction with TESK1, possibly by vesicular sequestration of SPRY2. Inhibition of the interaction with the serine/threonine-protein phosphatase 2A (PP2A) holoenzyme results in loss of PP2A-mediated dephosphorylation, resulting in the loss of SPRY2 interaction with GRB2. Interacts with GRB2. Interacts with CBL/C-CBL; the interaction inhibits CBL-mediated ubiquitination of EGFR. Interacts (via C-terminus) with CAV1 (via C-terminus). Post-translationally, cleaved at Pro-144 by the prolyl endopeptidase FAP (seprase) activity (in vitro).

Its subcellular location is the cytoplasm. The protein localises to the cytoskeleton. The protein resides in the cell projection. It is found in the ruffle membrane. In terms of biological role, antagonist of fibroblast growth factor (FGF) pathways via inhibition of FGF-mediated phosphorylation of ERK1/2. Thereby acts as an antagonist of FGF-induced retinal lens fiber differentiation, may inhibit limb bud outgrowth and may negatively modulate respiratory organogenesis. Inhibits TGFB-induced epithelial-to-mesenchymal transition in retinal lens epithelial cells. Inhibits CBL/C-CBL-mediated EGFR ubiquitination. The sequence is that of Protein sprouty homolog 2 (SPRY2) from Bos taurus (Bovine).